A 258-amino-acid chain; its full sequence is UPF0246 protein YaaA (258 aa).

The protein belongs to the UPF0246 family.

This is UPF0246 protein YaaA from Escherichia coli (strain UTI89 / UPEC).